A 593-amino-acid polypeptide reads, in one-letter code: NADH-quinone oxidoreductase subunit C/D (593 aa).

Residues 1 to 184 (MTADNAIFIP…DPYSLTLAKQ (184 aa)) form an NADH dehydrogenase I subunit C region. Residues 208 to 593 (DYMFLNLGPN…IDFVMADVDR (386 aa)) form an NADH dehydrogenase I subunit D region.

The protein in the N-terminal section; belongs to the complex I 30 kDa subunit family. It in the C-terminal section; belongs to the complex I 49 kDa subunit family. As to quaternary structure, NDH-1 is composed of 13 different subunits. Subunits NuoB, CD, E, F, and G constitute the peripheral sector of the complex.

It localises to the cell inner membrane. It catalyses the reaction a quinone + NADH + 5 H(+)(in) = a quinol + NAD(+) + 4 H(+)(out). In terms of biological role, NDH-1 shuttles electrons from NADH, via FMN and iron-sulfur (Fe-S) centers, to quinones in the respiratory chain. The immediate electron acceptor for the enzyme in this species is believed to be ubiquinone. Couples the redox reaction to proton translocation (for every two electrons transferred, four hydrogen ions are translocated across the cytoplasmic membrane), and thus conserves the redox energy in a proton gradient. The polypeptide is NADH-quinone oxidoreductase subunit C/D (Pseudomonas putida (strain GB-1)).